A 181-amino-acid chain; its full sequence is Protein Syd (181 aa).

Belongs to the Syd family.

The protein localises to the cell inner membrane. Its function is as follows. Interacts with the SecY protein in vivo. May bind preferentially to an uncomplexed state of SecY, thus functioning either as a chelating agent for excess SecY in the cell or as a regulatory factor that negatively controls the translocase function. In Shigella dysenteriae serotype 1 (strain Sd197), this protein is Protein Syd.